Reading from the N-terminus, the 361-residue chain is Chorismate synthase (361 aa).

Residues Arg-48 and Arg-54 each contribute to the NADP(+) site. FMN contacts are provided by residues 125–127, 238–239, Gly-278, 293–297, and Arg-319; these read RSS, NA, and KPTSS.

Belongs to the chorismate synthase family. As to quaternary structure, homotetramer. FMNH2 is required as a cofactor.

The enzyme catalyses 5-O-(1-carboxyvinyl)-3-phosphoshikimate = chorismate + phosphate. Its pathway is metabolic intermediate biosynthesis; chorismate biosynthesis; chorismate from D-erythrose 4-phosphate and phosphoenolpyruvate: step 7/7. Functionally, catalyzes the anti-1,4-elimination of the C-3 phosphate and the C-6 proR hydrogen from 5-enolpyruvylshikimate-3-phosphate (EPSP) to yield chorismate, which is the branch point compound that serves as the starting substrate for the three terminal pathways of aromatic amino acid biosynthesis. This reaction introduces a second double bond into the aromatic ring system. In Salmonella arizonae (strain ATCC BAA-731 / CDC346-86 / RSK2980), this protein is Chorismate synthase.